A 205-amino-acid chain; its full sequence is Myb-related protein 305 (205 aa).

2 consecutive HTH myb-type domains span residues 10–62 and 63–117; these read DVEV…LNYL and RPDV…QKHM. DNA-binding regions (H-T-H motif) lie at residues 38–62 and 90–113; these read WNSLARSAGLKRTGKSCRLRWLNYL and WSKIAKTLPGRTDNEIKNYWRTRI.

Expressed only in flowers.

Its subcellular location is the nucleus. In terms of biological role, transcription factor. The polypeptide is Myb-related protein 305 (Antirrhinum majus (Garden snapdragon)).